The following is a 206-amino-acid chain: N-(5'-phosphoribosyl)anthranilate isomerase (206 aa).

The protein belongs to the TrpF family.

The catalysed reaction is N-(5-phospho-beta-D-ribosyl)anthranilate = 1-(2-carboxyphenylamino)-1-deoxy-D-ribulose 5-phosphate. The protein operates within amino-acid biosynthesis; L-tryptophan biosynthesis; L-tryptophan from chorismate: step 3/5. The chain is N-(5'-phosphoribosyl)anthranilate isomerase from Chlamydia caviae (strain ATCC VR-813 / DSM 19441 / 03DC25 / GPIC) (Chlamydophila caviae).